We begin with the raw amino-acid sequence, 681 residues long: Conserved oligomeric Golgi complex subunit 2 (681 aa).

The protein belongs to the COG2 family. Component of the conserved oligomeric Golgi complex which is composed of eight different subunits and is required for normal Golgi morphology and localization.

It is found in the golgi apparatus membrane. Required for normal Golgi morphology and function. In Caenorhabditis elegans, this protein is Conserved oligomeric Golgi complex subunit 2 (cogc-2).